Reading from the N-terminus, the 411-residue chain is Imidazolonepropionase (411 aa).

2 residues coordinate Fe(3+): His75 and His77. His75 and His77 together coordinate Zn(2+). The 4-imidazolone-5-propanoate site is built by Arg84, Tyr147, and His180. Tyr147 is an N-formimidoyl-L-glutamate binding site. A Fe(3+)-binding site is contributed by His245. His245 contributes to the Zn(2+) binding site. Gln248 provides a ligand contact to 4-imidazolone-5-propanoate. Asp320 provides a ligand contact to Fe(3+). Asp320 is a Zn(2+) binding site. 2 residues coordinate N-formimidoyl-L-glutamate: Asn322 and Gly324. Thr325 provides a ligand contact to 4-imidazolone-5-propanoate.

This sequence belongs to the metallo-dependent hydrolases superfamily. HutI family. The cofactor is Zn(2+). Fe(3+) is required as a cofactor.

The protein resides in the cytoplasm. The enzyme catalyses 4-imidazolone-5-propanoate + H2O = N-formimidoyl-L-glutamate. The protein operates within amino-acid degradation; L-histidine degradation into L-glutamate; N-formimidoyl-L-glutamate from L-histidine: step 3/3. In terms of biological role, catalyzes the hydrolytic cleavage of the carbon-nitrogen bond in imidazolone-5-propanoate to yield N-formimidoyl-L-glutamate. It is the third step in the universal histidine degradation pathway. The protein is Imidazolonepropionase of Aeromonas salmonicida (strain A449).